Reading from the N-terminus, the 253-residue chain is uncharacterized protein (253 aa).

6 helical membrane-spanning segments follow: residues 17–37 (MWLLVWICGIIFLLGTGHIIA), 46–66 (IFGFFVAVAFFLLFLSPVFVF), 93–113 (LAASLLYQFVIQLALTAYGIW), 139–159 (MYGLISSLDMSVTVIVFWTVF), 172–192 (AMVLLVAMWLFFDEYIISPLV), and 222–242 (IHLSVLGFPIAIVITFLLLIM).

It localises to the cell membrane. This is an uncharacterized protein from Bacillus subtilis (strain 168).